A 404-amino-acid chain; its full sequence is Cytoplasmic tRNA 2-thiolation protein 2 (404 aa).

This sequence belongs to the CTU2/NCS2 family.

The protein resides in the cytoplasm. Its pathway is tRNA modification; 5-methoxycarbonylmethyl-2-thiouridine-tRNA biosynthesis. Plays a central role in 2-thiolation of mcm(5)S(2)U at tRNA wobble positions of tRNA(Lys), tRNA(Glu) and tRNA(Gln). May act by forming a heterodimer with NCS6/CTU1 that ligates sulfur from thiocarboxylated URM1 onto the uridine of tRNAs at wobble position. In Drosophila yakuba (Fruit fly), this protein is Cytoplasmic tRNA 2-thiolation protein 2.